The following is a 98-amino-acid chain: Acylphosphatase (98 aa).

One can recognise an Acylphosphatase-like domain in the interval 12–98; the sequence is TYYVRVRGVV…ERRFDRFQQQ (87 aa). Catalysis depends on residues Arg27 and Asn45.

This sequence belongs to the acylphosphatase family.

The enzyme catalyses an acyl phosphate + H2O = a carboxylate + phosphate + H(+). This chain is Acylphosphatase (acyP), found in Burkholderia ambifaria (strain ATCC BAA-244 / DSM 16087 / CCUG 44356 / LMG 19182 / AMMD) (Burkholderia cepacia (strain AMMD)).